Here is a 61-residue protein sequence, read N- to C-terminus: Large ribosomal subunit protein uL30 (61 aa).

The protein belongs to the universal ribosomal protein uL30 family. In terms of assembly, part of the 50S ribosomal subunit.

The protein is Large ribosomal subunit protein uL30 of Chromobacterium violaceum (strain ATCC 12472 / DSM 30191 / JCM 1249 / CCUG 213 / NBRC 12614 / NCIMB 9131 / NCTC 9757 / MK).